A 1287-amino-acid chain; its full sequence is Vacuolating cytotoxin autotransporter (1287 aa).

A signal peptide spans 1–33 (MEIQQTHRKINRPLVSLALVGALVSITPQQSHA). Residues 326–381 (PPEGGYKDKPNNTPSQSGAKNDKQESSQNNSNTQVINPPNSTQKTEVQPTQVIDGP) form a disordered region. Positions 351–376 (SSQNNSNTQVINPPNSTQKTEVQPTQ) are enriched in polar residues. Residues 1014–1287 (KYEKPTNVWA…ASNLGMRYSF (274 aa)) form the Autotransporter domain.

Its subcellular location is the periplasm. The protein localises to the secreted. It is found in the cell surface. The protein resides in the cell outer membrane. Induces vacuolation of eukaryotic cells. Causes ulceration and gastric lesions. The protein is Vacuolating cytotoxin autotransporter (vacA) of Helicobacter pylori (Campylobacter pylori).